A 432-amino-acid chain; its full sequence is Asparagine--tRNA ligase (432 aa).

It belongs to the class-II aminoacyl-tRNA synthetase family. Homodimer.

It is found in the cytoplasm. It carries out the reaction tRNA(Asn) + L-asparagine + ATP = L-asparaginyl-tRNA(Asn) + AMP + diphosphate + H(+). The chain is Asparagine--tRNA ligase from Lactobacillus gasseri (strain ATCC 33323 / DSM 20243 / BCRC 14619 / CIP 102991 / JCM 1131 / KCTC 3163 / NCIMB 11718 / NCTC 13722 / AM63).